Here is a 249-residue protein sequence, read N- to C-terminus: 1-(5-phosphoribosyl)-5-[(5-phosphoribosylamino)methylideneamino] imidazole-4-carboxamide isomerase (249 aa).

Asp11 serves as the catalytic Proton acceptor. Asp133 serves as the catalytic Proton donor.

It belongs to the HisA/HisF family.

Its subcellular location is the cytoplasm. The enzyme catalyses 1-(5-phospho-beta-D-ribosyl)-5-[(5-phospho-beta-D-ribosylamino)methylideneamino]imidazole-4-carboxamide = 5-[(5-phospho-1-deoxy-D-ribulos-1-ylimino)methylamino]-1-(5-phospho-beta-D-ribosyl)imidazole-4-carboxamide. It participates in amino-acid biosynthesis; L-histidine biosynthesis; L-histidine from 5-phospho-alpha-D-ribose 1-diphosphate: step 4/9. This is 1-(5-phosphoribosyl)-5-[(5-phosphoribosylamino)methylideneamino] imidazole-4-carboxamide isomerase from Actinobacillus succinogenes (strain ATCC 55618 / DSM 22257 / CCUG 43843 / 130Z).